We begin with the raw amino-acid sequence, 170 residues long: ATP synthase subunit b (170 aa).

Residues 22–41 (VLNWAVVVFGLYKFLPGFLG) form a helical membrane-spanning segment.

This sequence belongs to the ATPase B chain family. In terms of assembly, F-type ATPases have 2 components, F(1) - the catalytic core - and F(0) - the membrane proton channel. F(1) has five subunits: alpha(3), beta(3), gamma(1), delta(1), epsilon(1). F(0) has four main subunits: a(1), b(1), b'(1) and c(10-14). The alpha and beta chains form an alternating ring which encloses part of the gamma chain. F(1) is attached to F(0) by a central stalk formed by the gamma and epsilon chains, while a peripheral stalk is formed by the delta, b and b' chains.

The protein resides in the cellular thylakoid membrane. In terms of biological role, f(1)F(0) ATP synthase produces ATP from ADP in the presence of a proton or sodium gradient. F-type ATPases consist of two structural domains, F(1) containing the extramembraneous catalytic core and F(0) containing the membrane proton channel, linked together by a central stalk and a peripheral stalk. During catalysis, ATP synthesis in the catalytic domain of F(1) is coupled via a rotary mechanism of the central stalk subunits to proton translocation. Functionally, component of the F(0) channel, it forms part of the peripheral stalk, linking F(1) to F(0). This is ATP synthase subunit b from Prochlorococcus marinus subsp. pastoris (strain CCMP1986 / NIES-2087 / MED4).